The primary structure comprises 496 residues: RNA-binding motif protein, Y chromosome, family 1 member D (496 aa).

The RRM domain maps to 8–85; that stretch reads GKLFIGGLNR…KAIKVEQAKK (78 aa). 2 disordered regions span residues 67–349 and 452–496; these read DMNG…HRDY and KDQR…SSRY. Low complexity-rich tracts occupy residues 97–114 and 149–159; these read PASS…SARG and PVKRGPSSRSG. Residues 175–184 are compositionally biased toward polar residues; the sequence is NSWMGSQGPM. Composition is skewed to basic and acidic residues over residues 204-214, 242-253, 276-289, 313-326, 335-349, and 484-496; these read RNDRMSTRHDG, DNGHSNRDEHSS, AYRD…DESY, GYRD…HESY, SSRE…HRDY, and GESR…SSRY.

As to quaternary structure, interacts with splicing factor proteins SFRS3/SRP20, TRA2B/SFRS10, KHDRBS1/SAM68 and KHDRBS3. In terms of tissue distribution, testis-specific.

It is found in the nucleus. Functionally, RNA-binding protein which may be involved in spermatogenesis. Required for sperm development, possibly by participating in pre-mRNA splicing in the testis. The sequence is that of RNA-binding motif protein, Y chromosome, family 1 member D (RBMY1D) from Homo sapiens (Human).